The sequence spans 394 residues: Elongation factor Tu (394 aa).

In terms of domain architecture, tr-type G spans lysine 10–glutamine 204. The interval glycine 19–threonine 26 is G1. Residue glycine 19–threonine 26 coordinates GTP. A Mg(2+)-binding site is contributed by threonine 26. Residues glycine 60–asparagine 64 are G2. The tract at residues aspartate 81 to glycine 84 is G3. Residues aspartate 81 to histidine 85 and asparagine 136 to aspartate 139 contribute to the GTP site. The segment at asparagine 136–aspartate 139 is G4. Positions serine 174–leucine 176 are G5.

Belongs to the TRAFAC class translation factor GTPase superfamily. Classic translation factor GTPase family. EF-Tu/EF-1A subfamily. In terms of assembly, monomer.

It is found in the cytoplasm. The catalysed reaction is GTP + H2O = GDP + phosphate + H(+). In terms of biological role, GTP hydrolase that promotes the GTP-dependent binding of aminoacyl-tRNA to the A-site of ribosomes during protein biosynthesis. This chain is Elongation factor Tu, found in Shewanella putrefaciens (Pseudomonas putrefaciens).